We begin with the raw amino-acid sequence, 211 residues long: ATP phosphoribosyltransferase (211 aa).

This sequence belongs to the ATP phosphoribosyltransferase family. Short subfamily. In terms of assembly, heteromultimer composed of HisG and HisZ subunits.

It is found in the cytoplasm. The enzyme catalyses 1-(5-phospho-beta-D-ribosyl)-ATP + diphosphate = 5-phospho-alpha-D-ribose 1-diphosphate + ATP. Its pathway is amino-acid biosynthesis; L-histidine biosynthesis; L-histidine from 5-phospho-alpha-D-ribose 1-diphosphate: step 1/9. Functionally, catalyzes the condensation of ATP and 5-phosphoribose 1-diphosphate to form N'-(5'-phosphoribosyl)-ATP (PR-ATP). Has a crucial role in the pathway because the rate of histidine biosynthesis seems to be controlled primarily by regulation of HisG enzymatic activity. This chain is ATP phosphoribosyltransferase, found in Lacticaseibacillus casei (strain BL23) (Lactobacillus casei).